Reading from the N-terminus, the 729-residue chain is Phosphoribosylformylglycinamidine synthase subunit PurL (729 aa).

H54 is a catalytic residue. Residues Y57 and K96 each contribute to the ATP site. E98 contacts Mg(2+). Substrate-binding positions include 99 to 102 (SHNH) and R121. Residue H100 is the Proton acceptor of the active site. D122 contacts Mg(2+). Q245 is a binding site for substrate. D273 lines the Mg(2+) pocket. 317 to 319 (ETQ) lines the substrate pocket. Positions 495 and 532 each coordinate ATP. N533 is a binding site for Mg(2+). S535 lines the substrate pocket.

Belongs to the FGAMS family. Monomer. Part of the FGAM synthase complex composed of 1 PurL, 1 PurQ and 2 PurS subunits.

The protein localises to the cytoplasm. It carries out the reaction N(2)-formyl-N(1)-(5-phospho-beta-D-ribosyl)glycinamide + L-glutamine + ATP + H2O = 2-formamido-N(1)-(5-O-phospho-beta-D-ribosyl)acetamidine + L-glutamate + ADP + phosphate + H(+). It functions in the pathway purine metabolism; IMP biosynthesis via de novo pathway; 5-amino-1-(5-phospho-D-ribosyl)imidazole from N(2)-formyl-N(1)-(5-phospho-D-ribosyl)glycinamide: step 1/2. Functionally, part of the phosphoribosylformylglycinamidine synthase complex involved in the purines biosynthetic pathway. Catalyzes the ATP-dependent conversion of formylglycinamide ribonucleotide (FGAR) and glutamine to yield formylglycinamidine ribonucleotide (FGAM) and glutamate. The FGAM synthase complex is composed of three subunits. PurQ produces an ammonia molecule by converting glutamine to glutamate. PurL transfers the ammonia molecule to FGAR to form FGAM in an ATP-dependent manner. PurS interacts with PurQ and PurL and is thought to assist in the transfer of the ammonia molecule from PurQ to PurL. In Staphylococcus saprophyticus subsp. saprophyticus (strain ATCC 15305 / DSM 20229 / NCIMB 8711 / NCTC 7292 / S-41), this protein is Phosphoribosylformylglycinamidine synthase subunit PurL.